The primary structure comprises 299 residues: Foldase protein PrsA (299 aa).

Residues 1–19 (MKKWTIAASLSIGVLALSA) form the signal peptide. The N-palmitoyl cysteine moiety is linked to residue Cys-20. Cys-20 is lipidated: S-diacylglycerol cysteine. Residues 137 to 227 (NTEIQAQHIL…HGTHIIKVND (91 aa)) enclose the PpiC domain.

It belongs to the PrsA family.

The protein localises to the cell membrane. The catalysed reaction is [protein]-peptidylproline (omega=180) = [protein]-peptidylproline (omega=0). Functionally, plays a major role in protein secretion by helping the post-translocational extracellular folding of several secreted proteins. In Oceanobacillus iheyensis (strain DSM 14371 / CIP 107618 / JCM 11309 / KCTC 3954 / HTE831), this protein is Foldase protein PrsA.